Here is a 149-residue protein sequence, read N- to C-terminus: Large ribosomal subunit protein bL9 (149 aa).

The protein belongs to the bacterial ribosomal protein bL9 family.

In terms of biological role, binds to the 23S rRNA. This chain is Large ribosomal subunit protein bL9, found in Sulfurihydrogenibium sp. (strain YO3AOP1).